Here is a 394-residue protein sequence, read N- to C-terminus: 8-amino-7-oxononanoate synthase (394 aa).

Position 21 (Arg-21) interacts with substrate. Pyridoxal 5'-phosphate is bound at residue 112 to 113 (GY). His-137 is a binding site for substrate. 3 residues coordinate pyridoxal 5'-phosphate: Ser-183, His-211, and Thr-239. Lys-242 is modified (N6-(pyridoxal phosphate)lysine). Thr-358 serves as a coordination point for substrate.

It belongs to the class-II pyridoxal-phosphate-dependent aminotransferase family. BioF subfamily. In terms of assembly, homodimer. Requires pyridoxal 5'-phosphate as cofactor.

It carries out the reaction 6-carboxyhexanoyl-[ACP] + L-alanine + H(+) = (8S)-8-amino-7-oxononanoate + holo-[ACP] + CO2. The protein operates within cofactor biosynthesis; biotin biosynthesis. Its function is as follows. Catalyzes the decarboxylative condensation of pimeloyl-[acyl-carrier protein] and L-alanine to produce 8-amino-7-oxononanoate (AON), [acyl-carrier protein], and carbon dioxide. This is 8-amino-7-oxononanoate synthase from Paraburkholderia xenovorans (strain LB400).